The following is a 1004-amino-acid chain: Unconventional myosin-Id (1004 aa).

In terms of domain architecture, Myosin motor spans 9–695 (FGKADFVLLD…TIFSLEEQRA (687 aa)). An ATP-binding site is contributed by 102–109 (GESGAGKT). The interval 572–594 (MISLVEKLASKEPYYVRCIKPND) is actin-binding. IQ domains are found at residues 699 to 719 (KRIVLFLQKVWRGTLARMRYR) and 721 to 741 (MRAALIIIRAYRRYKVKSYIR). One can recognise a TH1 domain in the interval 812-1003 (GQRADLGLQR…RSGYILSVPG (192 aa)).

It belongs to the TRAFAC class myosin-kinesin ATPase superfamily. Myosin family. As to quaternary structure, interacts (via the two IQ motifs) with calmodulin. Interacts with F-actin.

Its subcellular location is the cytoplasm. It localises to the perikaryon. The protein resides in the cell projection. The protein localises to the dendrite. It is found in the early endosome. Its subcellular location is the cell cortex. In terms of biological role, unconventional myosin that functions as actin-based motor protein with ATPase activity. Plays a role in the formation of Kupffer's vesicle, an organ that functions as a left-right organizer during embryogenesis. Plays a role in vesicular trafficking events that are required for normal lumen expansion of Kupffer's vesicle. Required for normal orientation of cilia in Kupffer's vesicle, and thus for normal, unidirectional circular flow and normal angular flow velocity, which then mediates asymmetric gene expression and left-right asymmetric development. Plays a role in endosomal protein trafficking, and especially in the transfer of cargo proteins from early to recycling endosomes. Required for normal planar cell polarity in ciliated cells, for normal rotational polarity of cilia, and for coordinated, unidirectional ciliary movement. The chain is Unconventional myosin-Id (myo1d) from Danio rerio (Zebrafish).